Here is a 97-residue protein sequence, read N- to C-terminus: Secreted RxLR effector protein BLR05 (97 aa).

An N-terminal signal peptide occupies residues 1–21; that stretch reads MGPQHLLALVVVSILVAAGNA. The short motif at 32–60 is the RxLR-dEER element; sequence RALRPSVIADQEHAVHAIPATNFISKDED. Residues 69–89 form a helical membrane-spanning segment; sequence IEIIRIAIFSLLVVGVFAIMA.

It belongs to the RxLR effector family. As to quaternary structure, interacts with host transcription factor NAC069.

It is found in the secreted. The protein localises to the host endoplasmic reticulum membrane. Its function is as follows. Secreted effector that inhibits stress-induced relocalization of the transcription factor NAC069 to the nucleus, thus affecting its broad role in abiotic and biotic stress responses. This Bremia lactucae (Lettuce downy mildew) protein is Secreted RxLR effector protein BLR05.